The sequence spans 212 residues: GrpE protein homolog, mitochondrial (212 aa).

It belongs to the GrpE family. In terms of assembly, component of the PAM complex, at least composed of mtHsp70, MGE1, TIM44, PAM16, PAM17 and PAM18.

The protein localises to the mitochondrion matrix. In terms of biological role, essential component of the PAM complex, a complex required for the translocation of transit peptide-containing proteins from the inner membrane into the mitochondrial matrix in an ATP-dependent manner. Seems to control the nucleotide-dependent binding of SSC1 to substrate proteins. The protein is GrpE protein homolog, mitochondrial (mge1) of Eremothecium gossypii (strain ATCC 10895 / CBS 109.51 / FGSC 9923 / NRRL Y-1056) (Yeast).